A 124-amino-acid polypeptide reads, in one-letter code: Small ribosomal subunit protein uS12 (124 aa).

Asp89 carries the post-translational modification 3-methylthioaspartic acid.

It belongs to the universal ribosomal protein uS12 family. As to quaternary structure, part of the 30S ribosomal subunit. Contacts proteins S8 and S17. May interact with IF1 in the 30S initiation complex.

Its function is as follows. With S4 and S5 plays an important role in translational accuracy. Functionally, interacts with and stabilizes bases of the 16S rRNA that are involved in tRNA selection in the A site and with the mRNA backbone. Located at the interface of the 30S and 50S subunits, it traverses the body of the 30S subunit contacting proteins on the other side and probably holding the rRNA structure together. The combined cluster of proteins S8, S12 and S17 appears to hold together the shoulder and platform of the 30S subunit. The protein is Small ribosomal subunit protein uS12 of Blochmanniella floridana.